A 526-amino-acid polypeptide reads, in one-letter code: MSELEFEIERRRTFAIISHPDAGKTTLTEKLLLFGGAIQLAGSVKGRKATRHATSDWMEMEKQRGISVTTSVMQFQHRDRIFNLLDTPGHEDFSEDTYRTLTAVDSALMVIDSAKGVEERTIKLMEVCRLRDTPILTFINKLDREGREPVELLDEVERVLNIQCAPITWPIGMGKRFKGVYHLYEDAIHLFSASHGDRIVKGEVVEGLNSPKLDELLGDIADELRMEIELVRGASHEFDPDAYRAGRQTPVFFGSAINNFGILELLDAFAEYAPPPQARQARERLVAPGEDKFSGFVFKIQANMDPAHRDRIAFLRVCSGRYTKGVRLFHVRSGKAMQVANAITFQADSRENVEEAYPGDIIGLHNHGTIQVGDTFTQGENLKFEGIPSFAPELFRRVVLKDPLRSKALQRGLQQLSEEGATQLFKPLRNNDLILGAVGVLQFDVTAFRLKAEYNVDCVYEAVPVTTARWVSCSDPKKLEEFKRKVHDNLAEDGSGYLVYLATSRVNLSLTEERWPEIRFSATREL.

Residues 9–277 form the tr-type G domain; it reads ERRRTFAIIS…AFAEYAPPPQ (269 aa). Residues 18–25, 86–90, and 140–143 each bind GTP; these read SHPDAGKT, DTPGH, and NKLD.

This sequence belongs to the TRAFAC class translation factor GTPase superfamily. Classic translation factor GTPase family. PrfC subfamily.

Its subcellular location is the cytoplasm. Its function is as follows. Increases the formation of ribosomal termination complexes and stimulates activities of RF-1 and RF-2. It binds guanine nucleotides and has strong preference for UGA stop codons. It may interact directly with the ribosome. The stimulation of RF-1 and RF-2 is significantly reduced by GTP and GDP, but not by GMP. This Methylococcus capsulatus (strain ATCC 33009 / NCIMB 11132 / Bath) protein is Peptide chain release factor 3.